The sequence spans 184 residues: Large ribosomal subunit protein uL22B (184 aa).

K46 participates in a covalent cross-link: Glycyl lysine isopeptide (Lys-Gly) (interchain with G-Cter in ubiquitin). T70 carries the phosphothreonine modification.

The protein belongs to the universal ribosomal protein uL22 family. Component of the large ribosomal subunit (LSU). Mature yeast ribosomes consist of a small (40S) and a large (60S) subunit. The 40S small subunit contains 1 molecule of ribosomal RNA (18S rRNA) and 33 different proteins (encoded by 57 genes). The large 60S subunit contains 3 rRNA molecules (25S, 5.8S and 5S rRNA) and 46 different proteins (encoded by 81 genes). uL22 is associated with the polypeptide exit tunnel.

Its subcellular location is the cytoplasm. In terms of biological role, component of the ribosome, a large ribonucleoprotein complex responsible for the synthesis of proteins in the cell. The small ribosomal subunit (SSU) binds messenger RNAs (mRNAs) and translates the encoded message by selecting cognate aminoacyl-transfer RNA (tRNA) molecules. The large subunit (LSU) contains the ribosomal catalytic site termed the peptidyl transferase center (PTC), which catalyzes the formation of peptide bonds, thereby polymerizing the amino acids delivered by tRNAs into a polypeptide chain. The nascent polypeptides leave the ribosome through a tunnel in the LSU and interact with protein factors that function in enzymatic processing, targeting, and the membrane insertion of nascent chains at the exit of the ribosomal tunnel. This chain is Large ribosomal subunit protein uL22B, found in Saccharomyces cerevisiae (strain ATCC 204508 / S288c) (Baker's yeast).